A 165-amino-acid polypeptide reads, in one-letter code: Type 3 secretion system regulator YopR (165 aa).

It belongs to the YopR family.

It localises to the secreted. In terms of biological role, may be involved in the regulation of the assembly of the type III secretion system (T3SS), also called injectisome, which is used to inject bacterial effector proteins into eukaryotic host cells. May control the secretion and/or polymerization of YscF/SctF, the principal component of the needle filament, thereby impacting the assembly of the T3SS. Involved in pathogenesis. This chain is Type 3 secretion system regulator YopR, found in Yersinia pseudotuberculosis serotype I (strain IP32953).